The following is a 122-amino-acid chain: Large ribosomal subunit protein uL14 (122 aa).

This sequence belongs to the universal ribosomal protein uL14 family. As to quaternary structure, part of the 50S ribosomal subunit. Forms a cluster with proteins L3 and L19. In the 70S ribosome, L14 and L19 interact and together make contacts with the 16S rRNA in bridges B5 and B8.

Its function is as follows. Binds to 23S rRNA. Forms part of two intersubunit bridges in the 70S ribosome. This is Large ribosomal subunit protein uL14 from Clostridium tetani (strain Massachusetts / E88).